The chain runs to 150 residues: N-alpha-acetyltransferase 30 (150 aa).

Positions 2 to 150 constitute an N-acetyltransferase domain; that stretch reads VTIVPYSHQY…DAFRYILYPN (149 aa).

It belongs to the acetyltransferase family. MAK3 subfamily.

Its subcellular location is the cytoplasm. It is found in the nucleus. It carries out the reaction N-terminal L-methionyl-L-leucyl-[protein] + acetyl-CoA = N-terminal N(alpha)-acetyl-L-methionyl-L-leucyl-[protein] + CoA + H(+). The catalysed reaction is N-terminal L-methionyl-L-isoleucyl-[protein] + acetyl-CoA = N-terminal N(alpha)-acetyl-L-methionyl-L-isoleucyl-[protein] + CoA + H(+). The enzyme catalyses N-terminal L-methionyl-L-phenylalanyl-[protein] + acetyl-CoA = N-terminal N(alpha)-acetyl-L-methionyl-L-phenylalanyl-[protein] + CoA + H(+). It catalyses the reaction N-terminal L-methionyl-L-tryptophyl-[protein] + acetyl-CoA = N-terminal N(alpha)-acetyl-L-methionyl-L-tryptophyl-[protein] + CoA + H(+). It carries out the reaction N-terminal L-methionyl-L-tyrosyl-[protein] + acetyl-CoA = N-terminal N(alpha)-acetyl-L-methionyl-L-tyrosyl-[protein] + CoA + H(+). Functionally, catalytic component of the NatC N-terminal acetyltransferase. The polypeptide is N-alpha-acetyltransferase 30 (naa30) (Schizosaccharomyces pombe (strain 972 / ATCC 24843) (Fission yeast)).